Consider the following 404-residue polypeptide: Cysteine desulfurase IscS (404 aa).

Residues 75-76 (AT), asparagine 155, glutamine 183, and 203-205 (SGH) each bind pyridoxal 5'-phosphate. Position 206 is an N6-(pyridoxal phosphate)lysine (lysine 206). Threonine 243 lines the pyridoxal 5'-phosphate pocket. Cysteine 328 functions as the Cysteine persulfide intermediate in the catalytic mechanism. Cysteine 328 serves as a coordination point for [2Fe-2S] cluster.

This sequence belongs to the class-V pyridoxal-phosphate-dependent aminotransferase family. NifS/IscS subfamily. Homodimer. Forms a heterotetramer with IscU, interacts with other sulfur acceptors. The cofactor is pyridoxal 5'-phosphate.

Its subcellular location is the cytoplasm. The enzyme catalyses (sulfur carrier)-H + L-cysteine = (sulfur carrier)-SH + L-alanine. Its pathway is cofactor biosynthesis; iron-sulfur cluster biosynthesis. Functionally, master enzyme that delivers sulfur to a number of partners involved in Fe-S cluster assembly, tRNA modification or cofactor biosynthesis. Catalyzes the removal of elemental sulfur atoms from cysteine to produce alanine. Functions as a sulfur delivery protein for Fe-S cluster synthesis onto IscU, an Fe-S scaffold assembly protein, as well as other S acceptor proteins. The sequence is that of Cysteine desulfurase IscS from Mannheimia succiniciproducens (strain KCTC 0769BP / MBEL55E).